The chain runs to 56 residues: MSERKNSKSRRNYLVKCSCPNCTQESEHSFSRVQKGALLICPHCNKVFQTNLKAVA.

Cys-19, Cys-22, Cys-41, and Cys-44 together coordinate Zn(2+).

It depends on Zn(2+) as a cofactor.

The protein is Putative zinc-binding protein YnfU of Escherichia coli (strain K12).